Consider the following 342-residue polypeptide: Methylthioribose-1-phosphate isomerase (342 aa).

Substrate-binding positions include 44 to 46 (RGA), Arg85, and Gln192. Asp233 (proton donor) is an active-site residue. 243-244 (NK) contributes to the substrate binding site.

It belongs to the eIF-2B alpha/beta/delta subunits family. MtnA subfamily.

It catalyses the reaction 5-(methylsulfanyl)-alpha-D-ribose 1-phosphate = 5-(methylsulfanyl)-D-ribulose 1-phosphate. Its pathway is amino-acid biosynthesis; L-methionine biosynthesis via salvage pathway; L-methionine from S-methyl-5-thio-alpha-D-ribose 1-phosphate: step 1/6. Its function is as follows. Catalyzes the interconversion of methylthioribose-1-phosphate (MTR-1-P) into methylthioribulose-1-phosphate (MTRu-1-P). This chain is Methylthioribose-1-phosphate isomerase, found in Caldicellulosiruptor saccharolyticus (strain ATCC 43494 / DSM 8903 / Tp8T 6331).